The primary structure comprises 174 residues: NADH-quinone oxidoreductase subunit I (174 aa).

4Fe-4S ferredoxin-type domains lie at 61 to 91 and 103 to 132; these read LTVKKDGSLRCTACMLCATNCPAECIKITAA and ISYEIDILRCVFCGFCEEACPVDAIRLGPE. Cys-71, Cys-74, Cys-77, Cys-81, Cys-112, Cys-115, Cys-118, and Cys-122 together coordinate [4Fe-4S] cluster.

The protein belongs to the complex I 23 kDa subunit family. NDH-1 is composed of 14 different subunits. Subunits NuoA, H, J, K, L, M, N constitute the membrane sector of the complex. It depends on [4Fe-4S] cluster as a cofactor.

It is found in the cell inner membrane. The catalysed reaction is a quinone + NADH + 5 H(+)(in) = a quinol + NAD(+) + 4 H(+)(out). NDH-1 shuttles electrons from NADH, via FMN and iron-sulfur (Fe-S) centers, to quinones in the respiratory chain. The immediate electron acceptor for the enzyme in this species is believed to be ubiquinone. Couples the redox reaction to proton translocation (for every two electrons transferred, four hydrogen ions are translocated across the cytoplasmic membrane), and thus conserves the redox energy in a proton gradient. This chain is NADH-quinone oxidoreductase subunit I, found in Bdellovibrio bacteriovorus (strain ATCC 15356 / DSM 50701 / NCIMB 9529 / HD100).